A 1205-amino-acid chain; its full sequence is Centrosome and spindle pole associated protein 1 (1205 aa).

Coiled-coil stretches lie at residues 12–34 and 87–108; these read QKAKLAKDKAELESDPPYMEMKG and KLKEELRQDYRRYLTQGITQAK. A disordered region spans residues 16-37; it reads LAKDKAELESDPPYMEMKGKAS. Basic and acidic residues predominate over residues 158 to 173; that stretch reads STEKVRQVEKNIEPKS. Disordered regions lie at residues 158 to 187, 222 to 277, and 380 to 467; these read STEKVRQVEKNIEPKSQRNKNPISQGKSDL, SRRP…PGVS, and QQKK…GSTL. The span at 176-187 shows a compositional bias: polar residues; that stretch reads NKNPISQGKSDL. Basic and acidic residues-rich tracts occupy residues 222 to 233 and 257 to 275; these read SRRPLKQTKEEV and ANGERVLDRQHCRADRDPG. Residues 357–391 are a coiled coil; it reads EDRELTKRRKEKYRQELLEQIAEQQKKKRREKDLA. 2 stretches are compositionally biased toward basic and acidic residues: residues 401-410 and 417-428; these read DPEKSPDRLK and RHFEEMPPERPR. Ser405 bears the Phosphoserine mark. Pro residues predominate over residues 433 to 447; the sequence is TPPPPFSAPSSPSVP. Positions 574–618 form a coiled coil; that stretch reads STQSLQSYQEALQEQIREREARRKKERLEKEEYEAKLEAEMRIYN. A disordered region spans residues 677–704; sequence AENLEDSANKNSGPLQTQSSPFARGNTF. Positions 685 to 697 are enriched in polar residues; that stretch reads NKNSGPLQTQSSP. The stretch at 724-813 forms a coiled coil; sequence RFQIEEKRQR…EKHNLQLQHY (90 aa). Ser850 and Ser869 each carry phosphoserine. Residues 862–881 are disordered; sequence SSMSRAQSPPVPARKNQLRA. A coiled-coil region spans residues 874-911; it reads ARKNQLRAEEEKKNVIMELSEMRKQLRSEERRLQGRLL. Ser915 carries the post-translational modification Phosphoserine. The stretch at 993 to 1014 forms a coiled coil; that stretch reads QQQALLREQQKRLNRIKMRRDA. Disordered stretches follow at residues 1086 to 1105, 1124 to 1169, and 1182 to 1205; these read GLDFDSSRLHTPQDGLSLKS, RLTE…RPGT, and NEEQHKGPGKPGTFTWQGLSAAHA. Residues 1124 to 1134 show a composition bias toward basic and acidic residues; sequence RLTEQQKKPTN. A compositionally biased stretch (acidic residues) spans 1135-1145; it reads TDDEGSLVDPD. The span at 1146–1156 shows a compositional bias: basic and acidic residues; the sequence is DIMRHLSDDGR.

Interacts with PLEKHG6. Interacts with ARMC9, TOGARAM1, CCDC66, CEP104 and CEP290. Phosphorylated. Phosphorylation increases in colcemide-treated cells.

It localises to the cytoplasm. Its subcellular location is the cytoskeleton. It is found in the microtubule organizing center. The protein localises to the centrosome. The protein resides in the spindle. It localises to the spindle pole. Its subcellular location is the cell projection. It is found in the cilium. May play a role in cell-cycle-dependent microtubule organization. This is Centrosome and spindle pole associated protein 1 (Cspp1) from Mus musculus (Mouse).